The chain runs to 137 residues: Basic phospholipase A2 2 (137 aa).

Residues 1 to 11 (LVAVCVSLLGA) form the signal peptide. Positions 12 to 19 (ANIPPQPL) are excised as a propeptide. 7 disulfides stabilise this stretch: Cys30/Cys89, Cys44/Cys136, Cys46/Cys62, Cys61/Cys117, Cys68/Cys110, Cys78/Cys103, and Cys96/Cys108. Tyr45 and Gly47 together coordinate Ca(2+). Residue Tyr48 participates in alpha-D-mannopyranose binding. Ca(2+) is bound at residue Gly49. Residue His65 is part of the active site. Ca(2+) is bound at residue Asp66. Residue Asp66 coordinates alpha-D-mannopyranose. Residue Asp111 is part of the active site.

The protein belongs to the phospholipase A2 family. Group I subfamily. D49 sub-subfamily. Homodimer; non-covalently linked. Ca(2+) is required as a cofactor. Homodimerization and interaction of the catalytically important Asp-49 (here Asp-111) with mannose molecules may render this protein inactive. As to expression, expressed by the venom gland.

It is found in the secreted. The catalysed reaction is a 1,2-diacyl-sn-glycero-3-phosphocholine + H2O = a 1-acyl-sn-glycero-3-phosphocholine + a fatty acid + H(+). Snake venom phospholipase A2 (PLA2) that shows anticoagulant and neurotoxic activities. In terms of biological role, PLA2 catalyzes the calcium-dependent hydrolysis of the 2-acyl groups in 3-sn-phosphoglycerides. The sequence is that of Basic phospholipase A2 2 from Bungarus caeruleus (Indian krait).